The following is a 420-amino-acid chain: MNNRRVLVLGSGVTGKSAAEFLRNRGDYVIGVDGSAEALHSCHFFCERYLDSAEEFPEDIDLCVRSPGIKTSHPFVVEAKHRGIPIVTDIQLAFQDPEFHRYPSLGVTGSAGKTTTVLFLVHLLRSVGMSACAMGNIGFPILQAMYQKGIRVVEISSFQLAEQEIEIPVLSAAAILNISENHLDYHYTLQAYTEAKSHIAKCLQSPESLWVGDGVSFGKSYLEATREINLVLDKGSALKPLYLHDRNNYCAGYALANEVTKIPLESFLQAVLTFDKPPHRIEYLGEKDGVRYINDSKATTMSSVEKALIAVKENIIVILGGRNKGSNFASLIPVLTQTVKHVVAMGECRTEIAQALSSSNLPLTQAQDLQEAVHVAQSIAQPGDVILLSPGCASFDQFRSFEERGDCFKQLVGEMEALKI.

Residue 109–115 participates in ATP binding; that stretch reads GSAGKTT.

This sequence belongs to the MurCDEF family.

Its subcellular location is the cytoplasm. The enzyme catalyses UDP-N-acetyl-alpha-D-muramoyl-L-alanine + D-glutamate + ATP = UDP-N-acetyl-alpha-D-muramoyl-L-alanyl-D-glutamate + ADP + phosphate + H(+). The protein operates within cell wall biogenesis; peptidoglycan biosynthesis. Its function is as follows. Cell wall formation. Catalyzes the addition of glutamate to the nucleotide precursor UDP-N-acetylmuramoyl-L-alanine (UMA). This is UDP-N-acetylmuramoylalanine--D-glutamate ligase from Chlamydia abortus (strain DSM 27085 / S26/3) (Chlamydophila abortus).